We begin with the raw amino-acid sequence, 251 residues long: MNINDALTSILASKKYRALCPDTVRRILTEEWGRHKSPKQTVEAARTRLHGICGAYVTPESLKAAAAALSAGDVKKALSLHASTKERLAELDTLYDFIFSAETPRRVLDIACGLNPLALYERGIASVWGCDIHQGLGDVITPFAREKDWDFTFALQDVLCAPPAEAGDLALIFKLLPLLEREQAGSAMALLQSLNTPRMAVSFPTRSLGGRGKGMEANYAAWFEGGLPAEFEIEDKKTIGTELIYLIKKNG.

S-adenosyl-L-methionine is bound by residues Y56, 81 to 83 (HAS), R87, A111, D131, 157 to 158 (DV), F173, and E182.

Belongs to the methyltransferase superfamily. Aminoglycoside resistance family.

The catalysed reaction is guanosine(1405) in 16S rRNA + S-adenosyl-L-methionine = N(7)-methylguanosine(1405) in 16S rRNA + S-adenosyl-L-homocysteine. Its function is as follows. Specifically methylates the N(7) position of guanine 1405 in 16S rRNA. Confers resistance to various aminoglycosides, including kanamycin, tobramycin, amikacin, arbekacin, gentamicin, sisomicin and isepamicin. The sequence is that of 16S rRNA (guanine(1405)-N(7))-methyltransferase (rmtB) from Serratia marcescens.